An 80-amino-acid polypeptide reads, in one-letter code: Exodeoxyribonuclease 7 small subunit (80 aa).

Belongs to the XseB family. As to quaternary structure, heterooligomer composed of large and small subunits.

It is found in the cytoplasm. It carries out the reaction Exonucleolytic cleavage in either 5'- to 3'- or 3'- to 5'-direction to yield nucleoside 5'-phosphates.. Functionally, bidirectionally degrades single-stranded DNA into large acid-insoluble oligonucleotides, which are then degraded further into small acid-soluble oligonucleotides. The chain is Exodeoxyribonuclease 7 small subunit from Aliivibrio fischeri (strain ATCC 700601 / ES114) (Vibrio fischeri).